We begin with the raw amino-acid sequence, 360 residues long: uncharacterized protein (360 aa).

Positions 19-179 constitute a PNPLA domain; it reads LALGSGGARG…LDPLPMAPIA (161 aa). The GXSXG motif lies at 50–54; sequence GSSMG. The active-site Nucleophile is the Ser52. Residue Asp166 is the Proton acceptor of the active site. The DGA/G signature appears at 166-168; that stretch reads DGG. The tract at residues 251 to 282 is disordered; the sequence is DSWSQAPEIEQRPAGPPADREEAADTPGLPKM.

It belongs to the NTE family.

This is an uncharacterized protein from Mycobacterium bovis (strain ATCC BAA-935 / AF2122/97).